A 2379-amino-acid polypeptide reads, in one-letter code: Serine/threonine-protein kinase MEC1 (2379 aa).

Positions 1410-1955 (LLANKSLETN…LWHISVLCQS (546 aa)) constitute an FAT domain. The 304-residue stretch at 2060-2363 (FASSYKIFSS…QAETLIQEAT (304 aa)) folds into the PI3K/PI4K catalytic domain. Residues 2066–2072 (IFSSLKK) form a G-loop region. The interval 2232 to 2240 (GLGDRHCEN) is catalytic loop. Residues 2252–2276 (HVDFDCLFEKGENLPVPEIVPFRLT) form an activation loop region. Positions 2347–2379 (LLLSVSGQAETLIQEATSTENLSKMYIGWLPFW) constitute an FATC domain.

This sequence belongs to the PI3/PI4-kinase family. ATM subfamily.

The protein resides in the nucleus. It carries out the reaction L-seryl-[protein] + ATP = O-phospho-L-seryl-[protein] + ADP + H(+). It catalyses the reaction L-threonyl-[protein] + ATP = O-phospho-L-threonyl-[protein] + ADP + H(+). Functionally, serine/threonine protein kinase which activates checkpoint signaling upon genotoxic stresses such as ionizing radiation (IR), ultraviolet light (UV), or DNA replication stalling, thereby acting as a DNA damage sensor. Recognizes the substrate consensus sequence [ST]-Q. Recruited to DNA lesions in order to initiate the DNA repair by homologous recombination. Phosphorylates histone H2A to form H2AS128ph (gamma-H2A) at sites of DNA damage, also involved in the regulation of DNA damage response mechanism. Required for cell growth and meiotic recombination. This chain is Serine/threonine-protein kinase MEC1 (MEC1), found in Candida glabrata (strain ATCC 2001 / BCRC 20586 / JCM 3761 / NBRC 0622 / NRRL Y-65 / CBS 138) (Yeast).